Consider the following 435-residue polypeptide: uncharacterized protein (435 aa).

The next 11 membrane-spanning stretches (helical) occupy residues 9–29, 57–77, 110–130, 146–166, 176–196, 226–246, 280–300, 321–341, 343–363, 367–387, and 408–428; these read IIVL…ITFA, VGLD…GNIM, TLFG…GGIM, AINV…VLIV, VAAL…ALMT, LPSL…VFTP, VVTS…SWAM, WVIL…MDIT, AILI…IDPV, IIMV…TILF, and FLAL…SLLL.

Belongs to the YiaN/YgiK family.

The protein localises to the cell inner membrane. This is an uncharacterized protein from Salmonella typhimurium (strain LT2 / SGSC1412 / ATCC 700720).